We begin with the raw amino-acid sequence, 118 residues long: Large ribosomal subunit protein bL20 (118 aa).

Belongs to the bacterial ribosomal protein bL20 family.

In terms of biological role, binds directly to 23S ribosomal RNA and is necessary for the in vitro assembly process of the 50S ribosomal subunit. It is not involved in the protein synthesizing functions of that subunit. This is Large ribosomal subunit protein bL20 from Alteromonas mediterranea (strain DSM 17117 / CIP 110805 / LMG 28347 / Deep ecotype).